Here is a 294-residue protein sequence, read N- to C-terminus: Pyridoxal 5'-phosphate synthase subunit PdxS (294 aa).

Aspartate 24 contributes to the D-ribose 5-phosphate binding site. Lysine 81 acts as the Schiff-base intermediate with D-ribose 5-phosphate in catalysis. Position 153 (glycine 153) interacts with D-ribose 5-phosphate. Arginine 165 serves as a coordination point for D-glyceraldehyde 3-phosphate. Residues glycine 214 and 235–236 each bind D-ribose 5-phosphate; that span reads GS.

This sequence belongs to the PdxS/SNZ family. In terms of assembly, homohexamer and homododecamer. In the presence of PdxT, forms a dodecamer of heterodimers.

The enzyme catalyses aldehydo-D-ribose 5-phosphate + D-glyceraldehyde 3-phosphate + L-glutamine = pyridoxal 5'-phosphate + L-glutamate + phosphate + 3 H2O + H(+). Its pathway is cofactor biosynthesis; pyridoxal 5'-phosphate biosynthesis. Catalyzes the formation of pyridoxal 5'-phosphate from ribose 5-phosphate (RBP), glyceraldehyde 3-phosphate (G3P) and ammonia. The ammonia is provided by the PdxT subunit. Can also use ribulose 5-phosphate and dihydroxyacetone phosphate as substrates, resulting from enzyme-catalyzed isomerization of RBP and G3P, respectively. This Geobacillus kaustophilus (strain HTA426) protein is Pyridoxal 5'-phosphate synthase subunit PdxS.